Consider the following 316-residue polypeptide: MASTSRIDALPKVTCPNHPDALLVEDYRAGDMICSECGLVVGDRVIDVGSEWRTFSNDKAAADPSRVGDAQNPLLSGGDLTTMIGKGTGSASFDEFGNSKYQNRRTMSSSDRAMMNAFKEITNMSDRINLPRNIIDRTNNLFKQVYEQKSLKGRSNDAIASACLYIACRQEGVPRTFKEICAVSRISKKEIGRCFKLILKALETNVDLITTGDFMSRFCSNLGLTKQVQMAATHIARKAVELDLVPGRSPISVAAAAIYMASQASAEKRTQKEIGDIAGVADVTIRQSYRLIYPRAPDLFPADFKFDTPVDKLPQL.

The TFIIB-type zinc finger occupies 11–42; the sequence is PKVTCPNHPDALLVEDYRAGDMICSECGLVVG. Positions 15, 18, 34, and 37 each coordinate Zn(2+). Tandem repeats lie at residues 124–200 and 218–294.

Belongs to the TFIIB family.

The protein localises to the nucleus. It localises to the chromosome. It catalyses the reaction L-lysyl-[protein] + acetyl-CoA = N(6)-acetyl-L-lysyl-[protein] + CoA + H(+). Its function is as follows. General transcription factor that plays a role in transcription initiation by RNA polymerase II (Pol II). Involved in the pre-initiation complex (PIC) formation and Pol II recruitment at promoter DNA. Together with the TATA box-bound TBP forms the core initiation complex and provides a bridge between TBP and the Pol II-TFIIF complex. Released from the PIC early following the onset of transcription during the initiation and elongation transition and reassociates with TBP during the next transcription cycle. Associates with chromatin to core promoter-specific regions. Binds to two distinct DNA core promoter consensus sequence elements in a TBP-independent manner; these IIB-recognition elements (BREs) are localized immediately upstream (BREu), 5'-[GC][GC][GA]CGCC-3', and downstream (BREd), 5'-[GA]T[TGA][TG][GT][TG][TG]-3', of the TATA box element. Modulates transcription start site selection. Also exhibits autoacetyltransferase activity that contributes to the activated transcription. This chain is Transcription initiation factor IIB, found in Xenopus laevis (African clawed frog).